The sequence spans 709 residues: Coiled-coil domain-containing protein 13 (709 aa).

Coiled-coil stretches lie at residues isoleucine 70–leucine 97, glutamate 139–lysine 178, and glutamate 206–asparagine 288. Residue serine 258 is modified to Phosphoserine. The interval lysine 281–lysine 312 is disordered. Residues serine 293 to serine 302 show a composition bias toward low complexity. Residues aspartate 323–glutamine 457 adopt a coiled-coil conformation. 3 disordered regions span residues lysine 462–serine 499, serine 512–alanine 542, and lysine 600–glutamine 641. Phosphoserine is present on residues serine 469 and serine 532. A coiled-coil region spans residues glutamine 539–glutamate 604.

In terms of assembly, interacts with PCM1, CEP290 and PCNT.

It localises to the cytoplasm. The protein resides in the cytoskeleton. The protein localises to the microtubule organizing center. It is found in the centrosome. Its subcellular location is the centriolar satellite. It localises to the cilium basal body. Functionally, required for primary cilia formation and promotes the localization of the ciliopathy protein BBS4 to both centriolar satellites and cilia. The chain is Coiled-coil domain-containing protein 13 from Mus musculus (Mouse).